The sequence spans 144 residues: Universal stress protein A homolog 1 (144 aa).

Belongs to the universal stress protein A family. Homodimer.

Its subcellular location is the cytoplasm. Its function is as follows. Involved in stress response. The protein is Universal stress protein A homolog 1 (uspA1) of Coxiella burnetii (strain RSA 493 / Nine Mile phase I).